The primary structure comprises 216 residues: Pyridoxine/pyridoxamine 5'-phosphate oxidase (216 aa).

Residues 63 to 68 (RMVLMK), 78 to 79 (YS), lysine 85, and glutamine 107 contribute to the FMN site. Lysine 68 provides a ligand contact to substrate. Substrate-binding residues include tyrosine 125 and arginine 129. FMN-binding positions include 142 to 143 (QS) and tryptophan 187. Position 193 to 195 (193 to 195 (RLH)) interacts with substrate. Position 197 (arginine 197) interacts with FMN.

Belongs to the pyridoxamine 5'-phosphate oxidase family. Homodimer. It depends on FMN as a cofactor.

The enzyme catalyses pyridoxamine 5'-phosphate + O2 + H2O = pyridoxal 5'-phosphate + H2O2 + NH4(+). It catalyses the reaction pyridoxine 5'-phosphate + O2 = pyridoxal 5'-phosphate + H2O2. It participates in cofactor metabolism; pyridoxal 5'-phosphate salvage; pyridoxal 5'-phosphate from pyridoxamine 5'-phosphate: step 1/1. The protein operates within cofactor metabolism; pyridoxal 5'-phosphate salvage; pyridoxal 5'-phosphate from pyridoxine 5'-phosphate: step 1/1. Its function is as follows. Catalyzes the oxidation of either pyridoxine 5'-phosphate (PNP) or pyridoxamine 5'-phosphate (PMP) into pyridoxal 5'-phosphate (PLP). In Bradyrhizobium sp. (strain ORS 278), this protein is Pyridoxine/pyridoxamine 5'-phosphate oxidase.